A 282-amino-acid chain; its full sequence is Glutamate--LysW ligase ArgX (282 aa).

ATP is bound by residues Lys-87, Lys-127, 131 to 137, and 167 to 178; these read GSWGRLV and QEYINYKSRDIR. One can recognise an ATP-grasp domain in the interval 91 to 277; that stretch reads YSKLYREGIP…VAEELVSYVK (187 aa). Position 192 (Arg-192) interacts with substrate. Position 202 (Asn-202) interacts with ATP. Substrate is bound at residue 203 to 204; it reads IA. The Mg(2+) site is built by Asp-237, Glu-250, and Asn-252. Substrate is bound at residue 256–260; sequence EFKGF. The short motif at 259–260 is the GF motif that is essential for ArgX substrate specificity element; that stretch reads GF.

The protein belongs to the RimK family. LysX subfamily. Homotetramer. Interacts with LysW. Mg(2+) is required as a cofactor.

It carries out the reaction [amino-group carrier protein]-C-terminal-L-glutamate + L-glutamate + ATP = [amino-group carrier protein]-C-terminal-gamma-(L-glutamyl)-L-glutamate + ADP + phosphate + H(+). The protein operates within amino-acid biosynthesis; L-arginine biosynthesis. Catalyzes the ATP-dependent formation of a covalent bond between the amino group of glutamate and the gamma-carboxyl group of the C-terminal glutamate residue in LysW. The protein is Glutamate--LysW ligase ArgX of Sulfolobus acidocaldarius (strain ATCC 33909 / DSM 639 / JCM 8929 / NBRC 15157 / NCIMB 11770).